Consider the following 131-residue polypeptide: D-ribose pyranase (131 aa).

Catalysis depends on histidine 20, which acts as the Proton donor. Substrate-binding positions include aspartate 28, histidine 98, and 120-122 (YAN).

Belongs to the RbsD / FucU family. RbsD subfamily. As to quaternary structure, homodecamer.

The protein localises to the cytoplasm. The catalysed reaction is beta-D-ribopyranose = beta-D-ribofuranose. It participates in carbohydrate metabolism; D-ribose degradation; D-ribose 5-phosphate from beta-D-ribopyranose: step 1/2. Catalyzes the interconversion of beta-pyran and beta-furan forms of D-ribose. The protein is D-ribose pyranase of Laribacter hongkongensis (strain HLHK9).